Here is a 440-residue protein sequence, read N- to C-terminus: Doublesex- and mab-3-related transcription factor A2 (440 aa).

The segment at residues 59–106 is a DNA-binding region (DM); that stretch reads CARCRNHGVVSALKGHKRYCRWKDCMCAKCTLIAERQRVMAAQVALRR. Positions 167-261 are disordered; that stretch reads PKTPLPGTVT…SPSSAASRQM (95 aa). A compositionally biased stretch (basic and acidic residues) spans 199–213; the sequence is DMRHGSGSENGDRES. Low complexity predominate over residues 229-241; that stretch reads TPGSISPIGSDSG. Residues 251–261 show a composition bias toward polar residues; it reads PSPSSAASRQM. The 36-residue stretch at 261-296 folds into the DMA domain; it reads MNAIDILTRVFPNHKRSVLELVLQGCGKNVVQAIEQ.

The protein belongs to the DMRT family. In terms of tissue distribution, restrictively expressed in brain and developing germ cells, especially in spermatogonia, spermatocytes, spermatids, and sperm cells, and in developing oocytes, including early perinucleolus stage oocyte, late yolk vesicle stage oocyte, and oil drop stage oocyte.

Its subcellular location is the nucleus. Its function is as follows. May be involved in sexual development. The chain is Doublesex- and mab-3-related transcription factor A2 (dmrta2) from Danio rerio (Zebrafish).